The following is a 1872-amino-acid chain: Fatty acid synthase beta subunit pkiC (1872 aa).

The interval 174-425 is acetyltransferase (AT) domain; it reads VFGGQGECSR…DQSRIPFRDR (252 aa). The enoyl reductase (ER) domain stretch occupies residues 591 to 836; the sequence is NRVLGAPPIM…IIAATPGVSD (246 aa). Residues 1111 to 1132 are disordered; sequence TTPASWSTLSLTERDTSEETSD. Residues 1158-1597 form a dehydratase (DH) domain region; it reads PSHPLWMRAL…MPLEKLVVEI (440 aa). The MaoC-like domain maps to 1518–1617; sequence PPSNEPYAQL…CFSILAKRKE (100 aa).

This sequence belongs to the fungal fatty acid synthetase subunit beta family. [Alpha(6)beta(6)] hexamers of two multifunctional subunits (alpha and beta).

The enzyme catalyses acetyl-CoA + n malonyl-CoA + 2n NADPH + 4n H(+) = a long-chain-acyl-CoA + n CoA + n CO2 + 2n NADP(+).. The catalysed reaction is holo-[ACP] + acetyl-CoA = acetyl-[ACP] + CoA. It catalyses the reaction holo-[ACP] + malonyl-CoA = malonyl-[ACP] + CoA. It carries out the reaction a (3R)-hydroxyacyl-[ACP] = a (2E)-enoyl-[ACP] + H2O. The enzyme catalyses a 2,3-saturated acyl-[ACP] + NAD(+) = a (2E)-enoyl-[ACP] + NADH + H(+). The catalysed reaction is (9Z)-octadecenoyl-[ACP] + H2O = (9Z)-octadecenoate + holo-[ACP] + H(+). The protein operates within secondary metabolite biosynthesis. Functionally, fatty acid synthase beta subunit; part of the pki gene cluster that mediates the biosynthesis of 2,4-dihydroxy-3-methyl-6-(2-oxoundecyl)benzaldehyde. The first step in the pathway is the generation of the decanoyl starter unit by the FAS composed of subunits pkiB and pkiC, which is then transferred directly from the FAS to the SAT domain of the non-reducing polyketide synthase pkiA. PkiA condenses the decanoyyl starter unit with 4 malonyl-CoA units and performs one methylation step to yield 2,4-dihydroxy-3-methyl-6-(2-oxoundecyl)benzaldehyde. The chain is Fatty acid synthase beta subunit pkiC from Emericella nidulans (strain FGSC A4 / ATCC 38163 / CBS 112.46 / NRRL 194 / M139) (Aspergillus nidulans).